Consider the following 152-residue polypeptide: Protein FERTILITY RESTORER RF2, mitochondrial (152 aa).

Residues 1 to 52 constitute a mitochondrion transit peptide; sequence MSTLVTCSLPGAVTTHASTRRFGGSQFQTSQASCISFKREVSAKAVLRSVRC. A compositionally biased stretch (polar residues) spans 52 to 69; it reads CNATQTQSAQRKSSTATV. The segment at 52-99 is disordered; the sequence is CNATQTQSAQRKSSTATVKRSDPKGKIQGPKLDDGSGGFPPFRFGKGG.

It localises to the mitochondrion. Its function is as follows. Restores fertility in rice varieties with LD-type cytoplasmic male sterility (CMS). CMS is caused by genetic incompatibility between nuclei and mitochondria within male reproductive organs. Corresponds to the functional allele of RF2, which is dependent of the presence of Ile-78 in the japonica cultivars Fukuyama and Owarihatamochi (AC F1SZ42), and indica cultivar Kasalath (AC F1SZ41). Non-functional RF2 alleles are found in japonica cultivars Taichung 65 and Nipponbare (AC F1SZ44), where Ile-78 is replaced by Thr-78. The protein is Protein FERTILITY RESTORER RF2, mitochondrial of Oryza sativa subsp. japonica (Rice).